We begin with the raw amino-acid sequence, 488 residues long: Glutamyl-tRNA(Gln) amidotransferase subunit A (488 aa).

Residues K77 and S152 each act as charge relay system in the active site. The Acyl-ester intermediate role is filled by S176.

It belongs to the amidase family. GatA subfamily. Heterotrimer of A, B and C subunits.

The catalysed reaction is L-glutamyl-tRNA(Gln) + L-glutamine + ATP + H2O = L-glutaminyl-tRNA(Gln) + L-glutamate + ADP + phosphate + H(+). Functionally, allows the formation of correctly charged Gln-tRNA(Gln) through the transamidation of misacylated Glu-tRNA(Gln) in organisms which lack glutaminyl-tRNA synthetase. The reaction takes place in the presence of glutamine and ATP through an activated gamma-phospho-Glu-tRNA(Gln). The sequence is that of Glutamyl-tRNA(Gln) amidotransferase subunit A from Streptococcus pyogenes serotype M4 (strain MGAS10750).